A 35-amino-acid chain; its full sequence is Photosystem II reaction center protein T (35 aa).

A helical transmembrane segment spans residues 3 to 23 (ALVYTFLLVGTLGIIFFAIFF).

It belongs to the PsbT family. In terms of assembly, PSII is composed of 1 copy each of membrane proteins PsbA, PsbB, PsbC, PsbD, PsbE, PsbF, PsbH, PsbI, PsbJ, PsbK, PsbL, PsbM, PsbT, PsbY, PsbZ, Psb30/Ycf12, at least 3 peripheral proteins of the oxygen-evolving complex and a large number of cofactors. It forms dimeric complexes.

Its subcellular location is the plastid. It is found in the chloroplast thylakoid membrane. In terms of biological role, found at the monomer-monomer interface of the photosystem II (PS II) dimer, plays a role in assembly and dimerization of PSII. PSII is a light-driven water plastoquinone oxidoreductase, using light energy to abstract electrons from H(2)O, generating a proton gradient subsequently used for ATP formation. This Staurastrum punctulatum (Green alga) protein is Photosystem II reaction center protein T.